Reading from the N-terminus, the 264-residue chain is MPPVPNDKPFTLAGRTYQSRLLVGTGKYKDLEETRAAIEASGAEIVTVAVRRTNIGQNPGEPNLLDVISPERYTILPNTAGCFTAEDAVRTCRLARELLDGHKLVKLEVLADQKTLFPNVIETLKAAEVLIKDGFDVMVYTSDDPIIARQLAEMGCIAVMPLAGLIGTGLGICNPYNLRIILEEATVPVLVDAGVGTASDATIAMELGCEAVLMNSAIAHAQNPVLMAEAMKYAIEAGRLAYLAGRMPKKLYASASSPLDGLIR.

The Schiff-base intermediate with DXP role is filled by Lys106. 1-deoxy-D-xylulose 5-phosphate contacts are provided by residues Gly167, 193–194, and 215–216; these read AG and NS.

Belongs to the ThiG family. Homotetramer. Forms heterodimers with either ThiH or ThiS.

It localises to the cytoplasm. It catalyses the reaction [ThiS sulfur-carrier protein]-C-terminal-Gly-aminoethanethioate + 2-iminoacetate + 1-deoxy-D-xylulose 5-phosphate = [ThiS sulfur-carrier protein]-C-terminal Gly-Gly + 2-[(2R,5Z)-2-carboxy-4-methylthiazol-5(2H)-ylidene]ethyl phosphate + 2 H2O + H(+). It functions in the pathway cofactor biosynthesis; thiamine diphosphate biosynthesis. In terms of biological role, catalyzes the rearrangement of 1-deoxy-D-xylulose 5-phosphate (DXP) to produce the thiazole phosphate moiety of thiamine. Sulfur is provided by the thiocarboxylate moiety of the carrier protein ThiS. In vitro, sulfur can be provided by H(2)S. This is Thiazole synthase from Stutzerimonas stutzeri (strain A1501) (Pseudomonas stutzeri).